The chain runs to 133 residues: DNA-binding protein StpA (133 aa).

The interval 81–115 (AMPRSAKKRQPRPAKYRFTDFNGEEKTWTGQGRTP) is disordered. Over residues 85 to 95 (SAKKRQPRPAK) the composition is skewed to basic residues. Residues 111–116 (QGRTPK) mediate DNA binding.

It belongs to the histone-like protein H-NS family. As to quaternary structure, forms homodimers, can interact with H-NS.

The protein localises to the cytoplasm. It localises to the nucleoid. Its function is as follows. A DNA-binding protein that acts in a fashion similar to H-NS, repressing gene transcription. A subset of H-NS/StpA-regulated genes require auxillary proteins for repression; these auxillary proteins (Hha and other similar proteins) may also modulate oligomerization of the H-NS/StpA complex. This chain is DNA-binding protein StpA (stpA), found in Salmonella typhi.